Consider the following 125-residue polypeptide: UPF0102 protein PSPA7_4996 (125 aa).

Belongs to the UPF0102 family.

The protein is UPF0102 protein PSPA7_4996 of Pseudomonas paraeruginosa (strain DSM 24068 / PA7) (Pseudomonas aeruginosa (strain PA7)).